A 408-amino-acid polypeptide reads, in one-letter code: uncharacterized protein (408 aa).

A helical transmembrane segment spans residues 56–76 (YWAGPAAASMVAAVTPYVAWL).

Belongs to the mycobacterial PPE family.

The protein localises to the cell membrane. This is an uncharacterized protein from Mycobacterium bovis (strain ATCC BAA-935 / AF2122/97).